Consider the following 468-residue polypeptide: Phosphoglucosamine mutase (468 aa).

The active-site Phosphoserine intermediate is Ser112. Mg(2+)-binding residues include Ser112, Asp254, Asp256, and Asp258. Ser112 bears the Phosphoserine mark.

It belongs to the phosphohexose mutase family. Mg(2+) is required as a cofactor. Activated by phosphorylation.

It catalyses the reaction alpha-D-glucosamine 1-phosphate = D-glucosamine 6-phosphate. In terms of biological role, catalyzes the conversion of glucosamine-6-phosphate to glucosamine-1-phosphate. In Prochlorococcus marinus (strain MIT 9303), this protein is Phosphoglucosamine mutase.